Reading from the N-terminus, the 247-residue chain is Segregation and condensation protein A (247 aa).

Belongs to the ScpA family. As to quaternary structure, component of a cohesin-like complex composed of ScpA, ScpB and the Smc homodimer, in which ScpA and ScpB bind to the head domain of Smc. The presence of the three proteins is required for the association of the complex with DNA.

It is found in the cytoplasm. Functionally, participates in chromosomal partition during cell division. May act via the formation of a condensin-like complex containing Smc and ScpB that pull DNA away from mid-cell into both cell halves. The protein is Segregation and condensation protein A of Bacillus cereus (strain AH187).